The sequence spans 208 residues: Small ribosomal subunit protein uS4 (208 aa).

An S4 RNA-binding domain is found at 98–163 (TRLDNVVFRL…TPLFKEIVDG (66 aa)).

The protein belongs to the universal ribosomal protein uS4 family. In terms of assembly, part of the 30S ribosomal subunit. Contacts protein S5. The interaction surface between S4 and S5 is involved in control of translational fidelity.

Functionally, one of the primary rRNA binding proteins, it binds directly to 16S rRNA where it nucleates assembly of the body of the 30S subunit. In terms of biological role, with S5 and S12 plays an important role in translational accuracy. The polypeptide is Small ribosomal subunit protein uS4 (Heliobacterium modesticaldum (strain ATCC 51547 / Ice1)).